We begin with the raw amino-acid sequence, 23 residues long: Conotoxin Cl6c (23 aa).

Cystine bridges form between Cys-2-Cys-12, Cys-5-Cys-17, and Cys-11-Cys-21.

Expressed by the venom duct.

It localises to the secreted. This Californiconus californicus (California cone) protein is Conotoxin Cl6c.